Reading from the N-terminus, the 809-residue chain is MQFPESWLRTFVDPQLTTDELSHALTMAGLEVESLSKAAPPTSKIVVGRVLEVVKHPDADKLNVCQVDAGTGATLNIVCGAPNVAPGIKVPVALVGAELPPAEEGGKPFAIKLSKLRGVESQGMLCSARELKLSEDHSGLLVLPEDTPVGQDIRETLNLDDTIFEIKLTPNKADCLSVFGIARETAAITGAPLTPVDIRPVRVELDETLPVRIAAPDLCGRFSGRVIRGVNAHAKTPQWMVERLARSGQRSVSALVDISNYVMFELGRPSHVFDLDKIHGGIEVRWGKRGESLKLLNGNTVELDETVGVISDGRQVESLAGIMGGDSTAVTLDTTNIYLEAAFWWPDSIRGRARKYNFSTDAAHRFERGVDYATTVEHVERITQLILEICGGKAGPVDDQSVNLPQRAPVKMRVSRANRIIGVQIGADEIASIFTRLGLPFEREDDAFLVTPPSHRFDIEIEEDLIEEVARIYGFEKIPARPPVATSEMRATNETRRSIHDIRHALAARDYAETVNFSFVDAEWEQDFAGNDHPIRLLNPIASQLSVMRTTLFGSLISVLRHNLNRRADRVRLFEAGRVFLTDAASKAGELTVEGYVQPKRVGALAYGPALDEQWGAETRPVDFFDVKGDLEALLAPAAARFVKAEHPALHPGRSARIEVDGRAVGWIGELHPRLMQKYELPHAPVMFEVDADALIARALPAPTDVSKFPPVRRDIAVVVDQAVEVQALFDEMKKALAEEACRFVQKVVLFDEFRAKSNTSGGLAAHEKSLAFRVTLQDAAGTLQDEVVDQAIQTLVERMARAGARLRG.

The region spanning 39 to 154 is the tRNA-binding domain; the sequence is APPTSKIVVG…EDTPVGQDIR (116 aa). The region spanning 405–480 is the B5 domain; sequence PQRAPVKMRV…RIYGFEKIPA (76 aa). Positions 458, 464, 467, and 468 each coordinate Mg(2+). Residues 707-808 form the FDX-ACB domain; sequence SKFPPVRRDI…RMARAGARLR (102 aa).

The protein belongs to the phenylalanyl-tRNA synthetase beta subunit family. Type 1 subfamily. Tetramer of two alpha and two beta subunits. The cofactor is Mg(2+).

The protein localises to the cytoplasm. The enzyme catalyses tRNA(Phe) + L-phenylalanine + ATP = L-phenylalanyl-tRNA(Phe) + AMP + diphosphate + H(+). This Burkholderia lata (strain ATCC 17760 / DSM 23089 / LMG 22485 / NCIMB 9086 / R18194 / 383) protein is Phenylalanine--tRNA ligase beta subunit.